Consider the following 481-residue polypeptide: Adenosylhomocysteinase (481 aa).

3 residues coordinate substrate: Thr-65, Asp-140, and Glu-200. Residue 201-203 coordinates NAD(+); the sequence is TTT. Residues Lys-230 and Asp-234 each contribute to the substrate site. Residues Asn-235, 264–269, Glu-287, Asn-322, 343–345, and Asn-393 each bind NAD(+); these read GYGDVG and IGH.

The protein belongs to the adenosylhomocysteinase family. NAD(+) is required as a cofactor.

The protein localises to the cytoplasm. The catalysed reaction is S-adenosyl-L-homocysteine + H2O = L-homocysteine + adenosine. It functions in the pathway amino-acid biosynthesis; L-homocysteine biosynthesis; L-homocysteine from S-adenosyl-L-homocysteine: step 1/1. Functionally, may play a key role in the regulation of the intracellular concentration of adenosylhomocysteine. The protein is Adenosylhomocysteinase of Polynucleobacter asymbioticus (strain DSM 18221 / CIP 109841 / QLW-P1DMWA-1) (Polynucleobacter necessarius subsp. asymbioticus).